Consider the following 322-residue polypeptide: Replication factor C small subunit (322 aa).

45 to 52 (GPPGVGKT) provides a ligand contact to ATP.

This sequence belongs to the activator 1 small subunits family. RfcS subfamily. As to quaternary structure, heteromultimer composed of small subunits (RfcS) and large subunits (RfcL).

Part of the RFC clamp loader complex which loads the PCNA sliding clamp onto DNA. The protein is Replication factor C small subunit of Methanocella arvoryzae (strain DSM 22066 / NBRC 105507 / MRE50).